We begin with the raw amino-acid sequence, 595 residues long: Chaperone protein HscA homolog (595 aa).

Belongs to the heat shock protein 70 family.

Functionally, chaperone involved in the maturation of iron-sulfur cluster-containing proteins. Has a low intrinsic ATPase activity which is markedly stimulated by HscB. This Rickettsia akari (strain Hartford) protein is Chaperone protein HscA homolog.